The chain runs to 221 residues: uncharacterized protein (221 aa).

In terms of domain architecture, CUE spans 20-63; sequence DFDRAMLDFQAMFPSLSNSHIEYVLRKYDGDVSATINELLYDNT. Residues 131-194 form a disordered region; sequence EEKKKKSCSD…GPYIGEGEVK (64 aa). The segment covering 156–166 has biased composition (low complexity); sequence KNSKNSKISVN. The span at 169 to 183 shows a compositional bias: basic and acidic residues; sequence KKLEPRRRSDEDRVP.

This is an uncharacterized protein from Caenorhabditis elegans.